Consider the following 368-residue polypeptide: Cytochrome b (368 aa).

A run of 4 helical transmembrane segments spans residues 25 to 45, 69 to 90, 105 to 125, and 170 to 190; these read FGSM…FLAM, WIMQ…YIHI, WLSG…GYVL, and FFAL…IHII. Positions 75 and 89 each coordinate heme b. Heme b-binding residues include histidine 174 and histidine 188. Histidine 193 is a binding site for a ubiquinone. The next 4 membrane-spanning stretches (helical) occupy residues 218–238, 280–300, 312–332, and 339–358; these read YKDM…MSFT, LGGT…PFTH, LTQT…WTAT, and FIFI…IINP.

This sequence belongs to the cytochrome b family. As to quaternary structure, the cytochrome bc1 complex contains 3 respiratory subunits (MT-CYB, CYC1 and UQCRFS1), 2 core proteins (UQCRC1 and UQCRC2) and probably 6 low-molecular weight proteins. The cofactor is heme b.

The protein localises to the mitochondrion inner membrane. Functionally, component of the ubiquinol-cytochrome c reductase complex (complex III or cytochrome b-c1 complex) that is part of the mitochondrial respiratory chain. The b-c1 complex mediates electron transfer from ubiquinol to cytochrome c. Contributes to the generation of a proton gradient across the mitochondrial membrane that is then used for ATP synthesis. This Notechis ater (Black tiger snake) protein is Cytochrome b (MT-CYB).